Here is an 88-residue protein sequence, read N- to C-terminus: uncharacterized protein (88 aa).

The segment at 39 to 63 (CEECGAPIPQARREAIPGVRLCIHC) adopts a dksA C4-type zinc-finger fold.

This is an uncharacterized protein from Escherichia coli (strain K12).